A 335-amino-acid chain; its full sequence is Tetraacyldisaccharide 4'-kinase (335 aa).

ATP is bound at residue 58-65 (TVGGNGKT).

Belongs to the LpxK family.

It catalyses the reaction a lipid A disaccharide + ATP = a lipid IVA + ADP + H(+). It participates in glycolipid biosynthesis; lipid IV(A) biosynthesis; lipid IV(A) from (3R)-3-hydroxytetradecanoyl-[acyl-carrier-protein] and UDP-N-acetyl-alpha-D-glucosamine: step 6/6. In terms of biological role, transfers the gamma-phosphate of ATP to the 4'-position of a tetraacyldisaccharide 1-phosphate intermediate (termed DS-1-P) to form tetraacyldisaccharide 1,4'-bis-phosphate (lipid IVA). This chain is Tetraacyldisaccharide 4'-kinase, found in Dichelobacter nodosus (strain VCS1703A).